We begin with the raw amino-acid sequence, 147 residues long: Acidic phospholipase A2 S3-24 (147 aa).

The signal sequence occupies residues 1 to 19; it reads MYPAHLLVLLAVCVSLLGA. Residues 20–27 constitute a propeptide that is removed on maturation; the sequence is SDMPPQPL. 7 disulfide bridges follow: C38–C99, C54–C146, C56–C72, C71–C127, C78–C120, C88–C113, and C106–C118. Y55, G57, and G59 together coordinate Ca(2+). Residue H75 is part of the active site. D76 lines the Ca(2+) pocket. D121 is an active-site residue.

Belongs to the phospholipase A2 family. Group I subfamily. D49 sub-subfamily. Ca(2+) serves as cofactor. Expressed by the venom gland.

Its subcellular location is the secreted. The catalysed reaction is a 1,2-diacyl-sn-glycero-3-phosphocholine + H2O = a 1-acyl-sn-glycero-3-phosphocholine + a fatty acid + H(+). Snake venom phospholipase A2 (PLA2) that inhibits collagen-induced platelet aggregation. PLA2 catalyzes the calcium-dependent hydrolysis of the 2-acyl groups in 3-sn-phosphoglycerides. The chain is Acidic phospholipase A2 S3-24 from Austrelaps superbus (Lowland copperhead snake).